Consider the following 376-residue polypeptide: Chaperone protein DnaJ (376 aa).

Residues 5–70 (DYYEILGVSK…QKRAAYDQYG (66 aa)) form the J domain. The CR-type zinc finger occupies 131–209 (GVTKEIRIPT…CHGHGRVERS (79 aa)). Zn(2+) is bound by residues cysteine 144, cysteine 147, cysteine 161, cysteine 164, cysteine 183, cysteine 186, cysteine 197, and cysteine 200. CXXCXGXG motif repeat units follow at residues 144 to 151 (CDVCHGSG), 161 to 168 (CPTCHGSG), 183 to 190 (CPHCQGRG), and 197 to 204 (CNKCHGHG).

This sequence belongs to the DnaJ family. As to quaternary structure, homodimer. Zn(2+) is required as a cofactor.

It localises to the cytoplasm. Participates actively in the response to hyperosmotic and heat shock by preventing the aggregation of stress-denatured proteins and by disaggregating proteins, also in an autonomous, DnaK-independent fashion. Unfolded proteins bind initially to DnaJ; upon interaction with the DnaJ-bound protein, DnaK hydrolyzes its bound ATP, resulting in the formation of a stable complex. GrpE releases ADP from DnaK; ATP binding to DnaK triggers the release of the substrate protein, thus completing the reaction cycle. Several rounds of ATP-dependent interactions between DnaJ, DnaK and GrpE are required for fully efficient folding. Also involved, together with DnaK and GrpE, in the DNA replication of plasmids through activation of initiation proteins. In Escherichia coli (strain K12 / DH10B), this protein is Chaperone protein DnaJ.